Here is a 290-residue protein sequence, read N- to C-terminus: Porphobilinogen deaminase (290 aa).

At Cys-238 the chain carries S-(dipyrrolylmethanemethyl)cysteine.

This sequence belongs to the HMBS family. In terms of assembly, monomer. It depends on dipyrromethane as a cofactor.

It carries out the reaction 4 porphobilinogen + H2O = hydroxymethylbilane + 4 NH4(+). It functions in the pathway porphyrin-containing compound metabolism; protoporphyrin-IX biosynthesis; coproporphyrinogen-III from 5-aminolevulinate: step 2/4. In terms of biological role, tetrapolymerization of the monopyrrole PBG into the hydroxymethylbilane pre-uroporphyrinogen in several discrete steps. This Clostridium botulinum (strain Eklund 17B / Type B) protein is Porphobilinogen deaminase.